A 174-amino-acid chain; its full sequence is Adenine phosphoribosyltransferase (174 aa).

This sequence belongs to the purine/pyrimidine phosphoribosyltransferase family. Homodimer.

Its subcellular location is the cytoplasm. It catalyses the reaction AMP + diphosphate = 5-phospho-alpha-D-ribose 1-diphosphate + adenine. Its pathway is purine metabolism; AMP biosynthesis via salvage pathway; AMP from adenine: step 1/1. Functionally, catalyzes a salvage reaction resulting in the formation of AMP, that is energically less costly than de novo synthesis. This is Adenine phosphoribosyltransferase from Nitrosomonas europaea (strain ATCC 19718 / CIP 103999 / KCTC 2705 / NBRC 14298).